The sequence spans 439 residues: Enolase (439 aa).

Substrate is bound by residues His-160 and Glu-169. Catalysis depends on Glu-212, which acts as the Proton donor. Mg(2+) contacts are provided by Asp-247, Glu-296, and Asp-323. Residues Glu-296 and Asp-323 each coordinate substrate. The Proton acceptor role is filled by Lys-348. Substrate-binding positions include 375-378 (SHRS) and Lys-399.

This sequence belongs to the enolase family. Homodimer. The cofactor is Mg(2+).

Its subcellular location is the cytoplasm. It carries out the reaction (2R)-2-phosphoglycerate = phosphoenolpyruvate + H2O. The protein operates within carbohydrate degradation; glycolysis; pyruvate from D-glyceraldehyde 3-phosphate: step 4/5. This Rhodotorula mucilaginosa (Yeast) protein is Enolase (ENO).